Here is a 230-residue protein sequence, read N- to C-terminus: MAIGKRLNKAREGVDREKLYPLAEAIKMVKERAKAKFDETIEVAINLGVDPRHADQMVRGVVTLPNGTGRTLRVGVFARGAKADEAKAAGADVVGAEDLVEKVQNGSIDFDRCIATPDMMPLVGRLGKVLGPRGLMPNPKIGTVTMDVTGAVKGAKGGSVEFRVEKAGILQAGVGKASFSEEKLVENIKALADAVSKAKPAGSKGTYIQRVAVSSTMGPGVKVEPGTILG.

Belongs to the universal ribosomal protein uL1 family. In terms of assembly, part of the 50S ribosomal subunit.

Its function is as follows. Binds directly to 23S rRNA. The L1 stalk is quite mobile in the ribosome, and is involved in E site tRNA release. Functionally, protein L1 is also a translational repressor protein, it controls the translation of the L11 operon by binding to its mRNA. In Bradyrhizobium diazoefficiens (strain JCM 10833 / BCRC 13528 / IAM 13628 / NBRC 14792 / USDA 110), this protein is Large ribosomal subunit protein uL1.